The following is a 636-amino-acid chain: ATP-dependent zinc metalloprotease FtsH 1 (636 aa).

Over 1–18 (MKLSPPKKNLPPQKNNEP) the chain is Cytoplasmic. Residues 19-39 (PFPYLRLLVQVGIALFLVWIW) traverse the membrane as a helical segment. At 40 to 126 (QESLHKATVS…YGSVKPSLLS (87 aa)) the chain is on the periplasmic side. Residues 127–147 (QILFSWVVPILIFFLVWFALA) form a helical membrane-spanning segment. Residues 148–636 (RFMGGGGAGY…KEAPSYSSTL (489 aa)) lie on the Cytoplasmic side of the membrane. Residue 220–227 (GPPGTGKT) participates in ATP binding. His-442 serves as a coordination point for Zn(2+). The active site involves Glu-443. Residues His-446 and Asp-519 each coordinate Zn(2+).

This sequence in the central section; belongs to the AAA ATPase family. The protein in the C-terminal section; belongs to the peptidase M41 family. As to quaternary structure, homohexamer. Zn(2+) serves as cofactor.

Its subcellular location is the cell inner membrane. Its function is as follows. Acts as a processive, ATP-dependent zinc metallopeptidase for both cytoplasmic and membrane proteins. Plays a role in the quality control of integral membrane proteins. This chain is ATP-dependent zinc metalloprotease FtsH 1, found in Methylacidiphilum infernorum (isolate V4) (Methylokorus infernorum (strain V4)).